The following is a 211-amino-acid chain: Thymidylate kinase (211 aa).

ATP is bound at residue G7–T14.

This sequence belongs to the thymidylate kinase family.

It catalyses the reaction dTMP + ATP = dTDP + ADP. Its function is as follows. Phosphorylation of dTMP to form dTDP in both de novo and salvage pathways of dTTP synthesis. This is Thymidylate kinase from Mesoplasma florum (strain ATCC 33453 / NBRC 100688 / NCTC 11704 / L1) (Acholeplasma florum).